A 331-amino-acid chain; its full sequence is Phosphate acyltransferase (331 aa).

Belongs to the PlsX family. Homodimer. Probably interacts with PlsY.

It is found in the cytoplasm. The catalysed reaction is a fatty acyl-[ACP] + phosphate = an acyl phosphate + holo-[ACP]. Its pathway is lipid metabolism; phospholipid metabolism. Catalyzes the reversible formation of acyl-phosphate (acyl-PO(4)) from acyl-[acyl-carrier-protein] (acyl-ACP). This enzyme utilizes acyl-ACP as fatty acyl donor, but not acyl-CoA. The polypeptide is Phosphate acyltransferase (Lactococcus lactis subsp. cremoris (strain SK11)).